We begin with the raw amino-acid sequence, 484 residues long: Cysteine desulfurase, mitochondrial (484 aa).

The segment covering 29-42 (LATSASTSSSTTTS) has biased composition (low complexity). Positions 29–69 (LATSASTSSSTTTSNAETGELHVSTPLDSPSVHPPDGSSIS) are disordered. Residues 153-154 (AT), asparagine 233, glutamine 261, and 281-283 (SSH) each bind pyridoxal 5'-phosphate. Lysine 284 is subject to N6-(pyridoxal phosphate)lysine. Threonine 321 serves as a coordination point for pyridoxal 5'-phosphate. The Cysteine persulfide intermediate role is filled by cysteine 408. Position 408 (cysteine 408) interacts with [2Fe-2S] cluster.

It belongs to the class-V pyridoxal-phosphate-dependent aminotransferase family. NifS/IscS subfamily. Requires pyridoxal 5'-phosphate as cofactor.

It is found in the mitochondrion. It catalyses the reaction (sulfur carrier)-H + L-cysteine = (sulfur carrier)-SH + L-alanine. Catalyzes the removal of elemental sulfur from cysteine to produce alanine. It supplies the inorganic sulfur for iron-sulfur (Fe-S) clusters. Plays a role in both tRNA-processing and mitochondrial metabolism. Involved in the 2-thio-modification of both 5-carboxymethylaminomethyl-2-thiouridine in mitochondrial tRNAs and 5-methoxycarbonylmethyl-2-thiouridine (mcm5s2U) in cytoplasmic tRNAs. This is Cysteine desulfurase, mitochondrial from Candida maltosa (Yeast).